Reading from the N-terminus, the 253-residue chain is 3-dehydroquinate dehydratase (253 aa).

3-dehydroquinate-binding positions include 46–48 and R82; that span reads EWR. The active-site Proton donor/acceptor is H143. The active-site Schiff-base intermediate with substrate is the K170. Positions 213, 232, and 236 each coordinate 3-dehydroquinate.

This sequence belongs to the type-I 3-dehydroquinase family. As to quaternary structure, homodimer.

It catalyses the reaction 3-dehydroquinate = 3-dehydroshikimate + H2O. Its pathway is metabolic intermediate biosynthesis; chorismate biosynthesis; chorismate from D-erythrose 4-phosphate and phosphoenolpyruvate: step 3/7. With respect to regulation, inhibited by flavonoids such as datiscetin, naringenin, marein and phloretin. Involved in the third step of the chorismate pathway, which leads to the biosynthesis of aromatic amino acids (AroAA). Catalyzes the cis-dehydration of 3-dehydroquinate (DHQ) and introduces the first double bond of the aromatic ring to yield 3-dehydroshikimate. The reaction involves the formation of an imine intermediate between the keto group of 3-dehydroquinate and the epsilon-amino group of Lys-170 at the active site. This is 3-dehydroquinate dehydratase from Enterococcus faecalis (strain ATCC 700802 / V583).